The following is a 101-amino-acid chain: MAKKSSIEKNNRRRKMTKNAAPKRARLKAIIADKDLPMEERFAATLKLAEMPRNSSATRIRNRCEITGRSRSVYRLNKLSRIAIRDLGSKGLVPGLVKSSW.

The span at 1–10 shows a compositional bias: basic and acidic residues; it reads MAKKSSIEKN. Positions 1 to 23 are disordered; the sequence is MAKKSSIEKNNRRRKMTKNAAPK. Residues 11-23 are compositionally biased toward basic residues; it reads NRRRKMTKNAAPK.

The protein belongs to the universal ribosomal protein uS14 family. Part of the 30S ribosomal subunit. Contacts proteins S3 and S10.

Binds 16S rRNA, required for the assembly of 30S particles and may also be responsible for determining the conformation of the 16S rRNA at the A site. This chain is Small ribosomal subunit protein uS14, found in Rhodopseudomonas palustris (strain BisB5).